A 237-amino-acid chain; its full sequence is Putative ATP-binding protein BMEII0108 (237 aa).

The ABC transporter domain occupies 5–205; sequence ISFNNVVMRY…DLPYPRTEAI (201 aa). 37 to 44 is a binding site for ATP; the sequence is GPSGCGKS.

This sequence belongs to the ABC transporter superfamily. As to quaternary structure, the complex is composed of two ATP-binding proteins (BMEII0108), two transmembrane proteins (BMEII0107) and a solute-binding protein (BMEII0109).

Its subcellular location is the cell inner membrane. Functionally, probably part of an ABC transporter complex. Probably Responsible for energy coupling to the transport system. This is Putative ATP-binding protein BMEII0108 from Brucella melitensis biotype 1 (strain ATCC 23456 / CCUG 17765 / NCTC 10094 / 16M).